The primary structure comprises 341 residues: MLTYFHPDQSLHHPRTYFSRGRMRMPQEVPERAARLVAAAFAMGFPVREPDDFGIAPIAAVHDTHYLRFLETVHREWKAMPEDWGDEAMSNIFVREPNALRGVLAQAARHLADGSCPVGEHTWRAAYWSAQSALAAAAAVRDGAPAAYALCRPPGHHARVDAAGGFCYLNNAAIAAQALRARHARVAVLDTDMHHGQGIQEIFYARRDVLYVSIHGDPTNFYPAVAGFDDERGAGEGLGYNVNLPMPHGSSEAAFFERVDDALRELRRFAPDALVLSLGFDVYRDDPQSQVAVTTDGFGRLGHLIGALRLPTVIVQEGGYHIESLEANARSFFGGFGALRG.

The active-site Proton donor/acceptor is His157. Residues Asp192, His194, and Asp281 each coordinate Zn(2+).

The protein belongs to the histone deacetylase family. Homodimer. Zn(2+) is required as a cofactor.

The enzyme catalyses N-acetylputrescine + H2O = putrescine + acetate. The catalysed reaction is N-acetylcadaverine + H2O = cadaverine + acetate. The protein operates within amine and polyamine metabolism. In terms of biological role, involved in polyamine metabolism. Catalyzes the deacetylation of various acetylated polyamines such as N-acetylputrescine and N-acetylcadaverine. The sequence is that of Acetylpolyamine amidohydrolase from Burkholderia pseudomallei (strain 1710b).